Reading from the N-terminus, the 555-residue chain is 6-phosphofructo-2-kinase/fructose-2,6-bisphosphatase 3 (555 aa).

A 6-phosphofructo-2-kinase region spans residues 1–245; sequence MPLELTQSRV…VYYLMNIHVQ (245 aa). Residue 42–50 coordinates ATP; that stretch reads GLPARGKTY. 2 residues coordinate beta-D-fructose 6-phosphate: Arg-75 and Arg-99. Asp-125 is an active-site residue. Beta-D-fructose 6-phosphate contacts are provided by Thr-127 and Arg-133. Cys-155 is an active-site residue. 164–169 lines the ATP pocket; it reads NIMEVK. Residues Lys-169, Arg-190, and Tyr-194 each coordinate beta-D-fructose 6-phosphate. Positions 246 to 555 are fructose-2,6-bisphosphatase; that stretch reads PRTIYLCRHG…CHIFSKFSPY (310 aa). Arg-253 serves as a coordination point for beta-D-fructose 2,6-bisphosphate. The active-site Tele-phosphohistidine intermediate is the His-254. Positions 260 and 266 each coordinate beta-D-fructose 2,6-bisphosphate. The active-site Proton donor/acceptor is Glu-323. Beta-D-fructose 2,6-bisphosphate-binding residues include Tyr-334, Arg-348, Lys-352, Tyr-363, Gln-389, and Arg-393. 345-348 is an ATP binding site; that stretch reads YALR. Residues 389–393 and Tyr-425 contribute to the ATP site; that span reads QAVLR. The interval 475-504 is disordered; it reads KQDAKKGPNPLMRRNSVTPLASPEPTKKPR. The residue at position 490 (Ser-490) is a Phosphoserine; by AMPK and PKA. At Thr-492 the chain carries Phosphothreonine. At Ser-496 the chain carries Phosphoserine.

In the C-terminal section; belongs to the phosphoglycerate mutase family. As to quaternary structure, homodimer. Forms a heterodimer with PFKFB2. Post-translationally, phosphorylation by AMPK stimulates activity.

The enzyme catalyses beta-D-fructose 2,6-bisphosphate + H2O = beta-D-fructose 6-phosphate + phosphate. It carries out the reaction beta-D-fructose 6-phosphate + ATP = beta-D-fructose 2,6-bisphosphate + ADP + H(+). Its function is as follows. Catalyzes both the synthesis and degradation of fructose 2,6-bisphosphate. The protein is 6-phosphofructo-2-kinase/fructose-2,6-bisphosphatase 3 (Pfkfb3) of Rattus norvegicus (Rat).